A 242-amino-acid chain; its full sequence is MHTDEKIYEGKAKVLYPTDDPQVFQVHFKDDATAFNAQKRGAIAGKGRINCTISAHLFQMLAKAGIANHFLSQPAPDQMLVRAVQIIPVEVVVRNIAAGSLCQQTGLPLGTPLKKPLVEFYYKNDDLGDPLLTRERLLLLELATAAEIEQLEALARQINEHLIVFFQQCGITLVDFKLEFGRDQNQHILLADEISPDTCRLWNQSETDPEQRVMDKDRFRRDLGNVESAYEQVMARVLAQPL.

The protein belongs to the SAICAR synthetase family.

It catalyses the reaction 5-amino-1-(5-phospho-D-ribosyl)imidazole-4-carboxylate + L-aspartate + ATP = (2S)-2-[5-amino-1-(5-phospho-beta-D-ribosyl)imidazole-4-carboxamido]succinate + ADP + phosphate + 2 H(+). It participates in purine metabolism; IMP biosynthesis via de novo pathway; 5-amino-1-(5-phospho-D-ribosyl)imidazole-4-carboxamide from 5-amino-1-(5-phospho-D-ribosyl)imidazole-4-carboxylate: step 1/2. This chain is Phosphoribosylaminoimidazole-succinocarboxamide synthase, found in Cyanothece sp. (strain PCC 7425 / ATCC 29141).